We begin with the raw amino-acid sequence, 204 residues long: Glycerol-3-phosphate acyltransferase (204 aa).

5 helical membrane-spanning segments follow: residues 6 to 26 (YIII…YIVA), 80 to 100 (LVGI…VAGH), 122 to 142 (LAVN…VVAI), 144 to 164 (KYVS…MIMV), and 168 to 188 (AGLI…RANI).

This sequence belongs to the PlsY family. In terms of assembly, probably interacts with PlsX.

The protein localises to the cell membrane. The catalysed reaction is an acyl phosphate + sn-glycerol 3-phosphate = a 1-acyl-sn-glycero-3-phosphate + phosphate. It functions in the pathway lipid metabolism; phospholipid metabolism. Functionally, catalyzes the transfer of an acyl group from acyl-phosphate (acyl-PO(4)) to glycerol-3-phosphate (G3P) to form lysophosphatidic acid (LPA). This enzyme utilizes acyl-phosphate as fatty acyl donor, but not acyl-CoA or acyl-ACP. This Clostridioides difficile (strain 630) (Peptoclostridium difficile) protein is Glycerol-3-phosphate acyltransferase.